A 248-amino-acid polypeptide reads, in one-letter code: Probable transcriptional regulatory protein BBta_6910 (248 aa).

This sequence belongs to the TACO1 family.

It localises to the cytoplasm. This chain is Probable transcriptional regulatory protein BBta_6910, found in Bradyrhizobium sp. (strain BTAi1 / ATCC BAA-1182).